The following is a 239-amino-acid chain: Ribitol-5-phosphate cytidylyltransferase (239 aa).

CTP is bound by residues 7–10 and 80–86; these read FAGG and GETGQMS.

This sequence belongs to the IspD/TarI cytidylyltransferase family. TarI subfamily.

It catalyses the reaction D-ribitol 5-phosphate + CTP + H(+) = CDP-L-ribitol + diphosphate. The protein operates within cell wall biogenesis; poly(ribitol phosphate) teichoic acid biosynthesis. Functionally, catalyzes the transfer of the cytidylyl group of CTP to D-ribitol 5-phosphate. The chain is Ribitol-5-phosphate cytidylyltransferase from Streptococcus agalactiae serotype III (strain NEM316).